The chain runs to 362 residues: Epoxide hydrolase 4 (362 aa).

The chain crosses the membrane as a helical; Signal-anchor for type II membrane protein span at residues 17–37; sequence SLLFWSLVYCYCGLCASIHLL. The AB hydrolase-1 domain maps to 94–211; it reads PLMLLLHGFP…EYILRHPAQL (118 aa). D169 acts as the Nucleophile in catalysis. The active-site Proton donor is the Y281. The active-site Proton acceptor is the H336.

It belongs to the AB hydrolase superfamily. Epoxide hydrolase family.

The protein localises to the membrane. This chain is Epoxide hydrolase 4 (EPHX4), found in Homo sapiens (Human).